The following is a 372-amino-acid chain: Protein-glutamate methylesterase/protein-glutamine glutaminase (372 aa).

The 119-residue stretch at 5-123 (RVLIVDDSAL…SANLTTVSET (119 aa)) folds into the Response regulatory domain. Aspartate 56 bears the 4-aspartylphosphate mark. Positions 140 to 151 (GTRSTDTTNSFS) are enriched in polar residues. Positions 140–177 (GTRSTDTTNSFSEPFKSTIPKPMTAAEPQKEEKPTPQR) are disordered. Positions 167-177 (PQKEEKPTPQR) are enriched in basic and acidic residues. The 187-residue stretch at 178–364 (EHGNIQIIAI…VSLDNMAAAI (187 aa)) folds into the CheB-type methylesterase domain. Active-site residues include serine 190, histidine 217, and aspartate 313.

The protein belongs to the CheB family. Post-translationally, phosphorylated by CheA. Phosphorylation of the N-terminal regulatory domain activates the methylesterase activity.

The protein localises to the cytoplasm. It carries out the reaction [protein]-L-glutamate 5-O-methyl ester + H2O = L-glutamyl-[protein] + methanol + H(+). The enzyme catalyses L-glutaminyl-[protein] + H2O = L-glutamyl-[protein] + NH4(+). Involved in chemotaxis. Part of a chemotaxis signal transduction system that modulates chemotaxis in response to various stimuli. Catalyzes the demethylation of specific methylglutamate residues introduced into the chemoreceptors (methyl-accepting chemotaxis proteins or MCP) by CheR. Also mediates the irreversible deamidation of specific glutamine residues to glutamic acid. The protein is Protein-glutamate methylesterase/protein-glutamine glutaminase of Treponema denticola (strain ATCC 35405 / DSM 14222 / CIP 103919 / JCM 8153 / KCTC 15104).